The primary structure comprises 455 residues: Kynureninase (455 aa).

Pyridoxal 5'-phosphate is bound by residues Leu-94, Thr-95, 122–125, Asp-208, His-211, and Tyr-233; that span reads FPSD. Lys-234 is subject to N6-(pyridoxal phosphate)lysine. The pyridoxal 5'-phosphate site is built by Trp-275 and Asn-303.

It belongs to the kynureninase family. Homodimer. Pyridoxal 5'-phosphate serves as cofactor.

Its subcellular location is the cytoplasm. The catalysed reaction is L-kynurenine + H2O = anthranilate + L-alanine + H(+). The enzyme catalyses 3-hydroxy-L-kynurenine + H2O = 3-hydroxyanthranilate + L-alanine + H(+). The protein operates within amino-acid degradation; L-kynurenine degradation; L-alanine and anthranilate from L-kynurenine: step 1/1. Its pathway is cofactor biosynthesis; NAD(+) biosynthesis; quinolinate from L-kynurenine: step 2/3. In terms of biological role, catalyzes the cleavage of L-kynurenine (L-Kyn) and L-3-hydroxykynurenine (L-3OHKyn) into anthranilic acid (AA) and 3-hydroxyanthranilic acid (3-OHAA), respectively. The sequence is that of Kynureninase from Vanderwaltozyma polyspora (strain ATCC 22028 / DSM 70294 / BCRC 21397 / CBS 2163 / NBRC 10782 / NRRL Y-8283 / UCD 57-17) (Kluyveromyces polysporus).